A 1071-amino-acid chain; its full sequence is DNA-directed RNA polymerase subunit beta (1071 aa).

Belongs to the RNA polymerase beta chain family. In plastids the minimal PEP RNA polymerase catalytic core is composed of four subunits: alpha, beta, beta', and beta''. When a (nuclear-encoded) sigma factor is associated with the core the holoenzyme is formed, which can initiate transcription.

The protein resides in the plastid. Its subcellular location is the chloroplast. It catalyses the reaction RNA(n) + a ribonucleoside 5'-triphosphate = RNA(n+1) + diphosphate. In terms of biological role, DNA-dependent RNA polymerase catalyzes the transcription of DNA into RNA using the four ribonucleoside triphosphates as substrates. In Adiantum capillus-veneris (Maidenhair fern), this protein is DNA-directed RNA polymerase subunit beta.